The primary structure comprises 260 residues: Histone H2A.v1 (260 aa).

2 disordered regions span residues 65–122 (VVQT…KQKS) and 236–260 (KKKG…SSKN). Residues 67–110 (QTNNKTNNKNNINNNNNNNNNNNNNNINNNNKNNKVKKTTTTTK) show a composition bias toward low complexity. Composition is skewed to basic and acidic residues over residues 111-121 (KNNEKSNEKQK) and 248-260 (DISK…SSKN).

The protein belongs to the histone H2A family.

This chain is Histone H2A.v1 (H2Av1), found in Dictyostelium discoideum (Social amoeba).